A 114-amino-acid chain; its full sequence is DNA-directed RNA polymerases II, IV and V subunit 9A (114 aa).

8 residues coordinate Zn(2+): Cys7, Cys10, Cys29, Cys32, Cys76, Cys79, Cys103, and Cys108. The TFIIS-type zinc-finger motif lies at 72-113 (KAVRCSKCQHREAVFFQATARGEEGMTLFFVCCNPNCGHRWR).

Belongs to the archaeal RpoM/eukaryotic RPA12/RPB9/RPC11 RNA polymerase family. As to quaternary structure, component of the RNA polymerase II, IV and V complexes. Interacts with NRPD1.

The protein resides in the nucleus. It localises to the nucleolus. Functionally, DNA-dependent RNA polymerase catalyzes the transcription of DNA into RNA using the four ribonucleoside triphosphates as substrates. Component of RNA polymerase II which synthesizes mRNA precursors and many functional non-coding RNAs. Pol II is the central component of the basal RNA polymerase II transcription machinery. It is composed of mobile elements that move relative to each other. Component of RNA polymerases IV and V which mediate short-interfering RNAs (siRNA) accumulation and subsequent RNA-directed DNA methylation-dependent (RdDM) transcriptional gene silencing (TGS) of endogenous repeated sequences, including transposable elements. Required for RNA silencing. The protein is DNA-directed RNA polymerases II, IV and V subunit 9A (NRPB9A) of Arabidopsis thaliana (Mouse-ear cress).